The chain runs to 476 residues: Cytosolic iron-sulfur assembly component 3 (476 aa).

Position 2 is an N-acetylalanine (Ala-2). [4Fe-4S] cluster-binding residues include Cys-24, Cys-71, Cys-74, Cys-77, Cys-190, and Cys-246. The segment at 297–316 (DGLTSSVSAEEPSSHRGGGS) is disordered. The [4Fe-4S] cluster site is built by Cys-395 and Cys-399.

This sequence belongs to the NARF family. External component of the CIA complex. In the CIA complex, interacts directly with CIAO1 and MMS19.

Its function is as follows. Component of the cytosolic iron-sulfur protein assembly (CIA) complex, a multiprotein complex that mediates the incorporation of iron-sulfur cluster into extramitochondrial Fe/S proteins. Seems to negatively regulate the level of HIF1A expression, although this effect could be indirect. This chain is Cytosolic iron-sulfur assembly component 3 (Ciao3), found in Mus musculus (Mouse).